We begin with the raw amino-acid sequence, 107 residues long: Nucleoid-associated protein Atu0095 (107 aa).

Residues 81–107 (KGEAQAQEKMADLTAGLPLPPGMKLPF) are disordered. Over residues 98–107 (PLPPGMKLPF) the composition is skewed to pro residues.

Belongs to the YbaB/EbfC family. As to quaternary structure, homodimer.

It is found in the cytoplasm. The protein resides in the nucleoid. Functionally, binds to DNA and alters its conformation. May be involved in regulation of gene expression, nucleoid organization and DNA protection. This is Nucleoid-associated protein Atu0095 from Agrobacterium fabrum (strain C58 / ATCC 33970) (Agrobacterium tumefaciens (strain C58)).